The sequence spans 255 residues: 3-deoxy-manno-octulosonate cytidylyltransferase (255 aa).

It belongs to the KdsB family.

It is found in the cytoplasm. The enzyme catalyses 3-deoxy-alpha-D-manno-oct-2-ulosonate + CTP = CMP-3-deoxy-beta-D-manno-octulosonate + diphosphate. It functions in the pathway nucleotide-sugar biosynthesis; CMP-3-deoxy-D-manno-octulosonate biosynthesis; CMP-3-deoxy-D-manno-octulosonate from 3-deoxy-D-manno-octulosonate and CTP: step 1/1. The protein operates within bacterial outer membrane biogenesis; lipopolysaccharide biosynthesis. Functionally, activates KDO (a required 8-carbon sugar) for incorporation into bacterial lipopolysaccharide in Gram-negative bacteria. The protein is 3-deoxy-manno-octulosonate cytidylyltransferase of Thermodesulfovibrio yellowstonii (strain ATCC 51303 / DSM 11347 / YP87).